The sequence spans 219 residues: UPF0619 GPI-anchored membrane protein AFUA_3G00880 (219 aa).

Positions 1 to 16 (MRFALTLTAFVGSVAA) are cleaved as a signal peptide. N85 is a glycosylation site (N-linked (GlcNAc...) asparagine). 2 disordered regions span residues 107-144 (SQQF…GTVS) and 160-205 (SSTL…SLTV). Low complexity predominate over residues 114-144 (SSGSSTTSDSTSSASATGSASTSSSSTGTVS). The GPI-like-anchor amidated asparagine moiety is linked to residue N198. The propeptide at 199-219 (GAGSLTVPAGSLLLGLVALAL) is removed in mature form.

This sequence belongs to the UPF0619 family. Post-translationally, the GPI-like anchor contains a phosphoceramide lipid group. The anchor position has not been determined.

Its subcellular location is the cell membrane. The sequence is that of UPF0619 GPI-anchored membrane protein AFUA_3G00880 from Aspergillus fumigatus (strain ATCC MYA-4609 / CBS 101355 / FGSC A1100 / Af293) (Neosartorya fumigata).